Here is a 461-residue protein sequence, read N- to C-terminus: MLKIFNTLTRQKEEFKPIHAGEVGMYVCGITVYDLCHIGHGRTFVAFDVVARYLRFLGYKLKYVRNITDIDDKIIKRANENGESFVALVDRMIAEMHKDFDALNILRPDMEPRATHHIAEIIELTEQLIAKGHAYAADNGDVMFDVPTDPTYGVLSRQDLDQLQAGARVDVVDDKRNPMDFVLWKMSKEGEPSWPSPWGAGRPGWHIECSAMNCKQLGNHFDIHGGGSDLMFPHHENEIAQSTCAHDGQYVNYWMHSGMVMVDREKMSKSLGNFFTVRDVLKYYDAETVRYFLMSGHYRSQLNYSEENLKQARAALERLYTALRGTEKTVAPAGGEAFEARFIEAMDDDFNTPEAYSVLFDMAREVNRLKAEDMAAANAMASHLRKLSAVLGLLEQEPEAFLQSGAQADDSEVAEIEALIQQRLDARKAKDWAAADAARDRLNEMGIVLEDGPQGTTWRRK.

C28 lines the Zn(2+) pocket. The short motif at 30–40 is the 'HIGH' region element; the sequence is ITVYDLCHIGH. Zn(2+)-binding residues include C209, H234, and E238. The short motif at 266 to 270 is the 'KMSKS' region element; the sequence is KMSKS. K269 is an ATP binding site.

This sequence belongs to the class-I aminoacyl-tRNA synthetase family. Monomer. Requires Zn(2+) as cofactor.

It localises to the cytoplasm. It carries out the reaction tRNA(Cys) + L-cysteine + ATP = L-cysteinyl-tRNA(Cys) + AMP + diphosphate. The sequence is that of Cysteine--tRNA ligase from Shigella sonnei (strain Ss046).